The primary structure comprises 78 residues: Large ribosomal subunit protein bL28 (78 aa).

A disordered region spans residues 1-20; the sequence is MSQVCQVTGKRPVVGNNRSH.

This sequence belongs to the bacterial ribosomal protein bL28 family.

The chain is Large ribosomal subunit protein bL28 from Idiomarina loihiensis (strain ATCC BAA-735 / DSM 15497 / L2-TR).